Here is a 104-residue protein sequence, read N- to C-terminus: L-rhamnose mutarotase (104 aa).

Tyr-18 is a binding site for substrate. His-22 (proton donor) is an active-site residue. Substrate is bound by residues Tyr-41 and 76 to 77 (WW).

This sequence belongs to the rhamnose mutarotase family. Homodimer.

Its subcellular location is the cytoplasm. The enzyme catalyses alpha-L-rhamnose = beta-L-rhamnose. Its pathway is carbohydrate metabolism; L-rhamnose metabolism. In terms of biological role, involved in the anomeric conversion of L-rhamnose. The protein is L-rhamnose mutarotase of Enterobacter sp. (strain 638).